Here is a 226-residue protein sequence, read N- to C-terminus: UPF0758 protein Sca_1264 (226 aa).

The MPN domain maps to 102-224 (KITSPQDAAD…YLSMVEGGYF (123 aa)). Positions 173, 175, and 186 each coordinate Zn(2+). The short motif at 173-186 (HNHPSGDVTPSKED) is the JAMM motif element.

It belongs to the UPF0758 family.

The chain is UPF0758 protein Sca_1264 from Staphylococcus carnosus (strain TM300).